Here is a 557-residue protein sequence, read N- to C-terminus: Aerobic glycerol-3-phosphate dehydrogenase (557 aa).

21-49 (DVVIIGGGITGAGIALDASERGMKVALVE) contacts FAD.

This sequence belongs to the FAD-dependent glycerol-3-phosphate dehydrogenase family. The cofactor is FAD.

It localises to the cytoplasm. It carries out the reaction a quinone + sn-glycerol 3-phosphate = dihydroxyacetone phosphate + a quinol. Its pathway is polyol metabolism; glycerol degradation via glycerol kinase pathway; glycerone phosphate from sn-glycerol 3-phosphate (aerobic route): step 1/1. The protein is Aerobic glycerol-3-phosphate dehydrogenase (glpD) of Staphylococcus saprophyticus subsp. saprophyticus (strain ATCC 15305 / DSM 20229 / NCIMB 8711 / NCTC 7292 / S-41).